The following is a 463-amino-acid chain: Exodeoxyribonuclease 7 large subunit (463 aa).

It belongs to the XseA family. As to quaternary structure, heterooligomer composed of large and small subunits.

It is found in the cytoplasm. The catalysed reaction is Exonucleolytic cleavage in either 5'- to 3'- or 3'- to 5'-direction to yield nucleoside 5'-phosphates.. In terms of biological role, bidirectionally degrades single-stranded DNA into large acid-insoluble oligonucleotides, which are then degraded further into small acid-soluble oligonucleotides. The protein is Exodeoxyribonuclease 7 large subunit of Klebsiella pneumoniae subsp. pneumoniae (strain ATCC 700721 / MGH 78578).